Reading from the N-terminus, the 402-residue chain is MDRTETRFRKRGQITGKITTSRQPHPQNEQSPQRSTSGYPLQEVVDDEMLGPSAPGVDPSPPCRSLGWKRKREWSDESEEEPEKELAPEPEETWVVEMLCGLKMKLKQQRVSSILPEHHKDFNSQLAPGVDPSPPHRSFCWKRKMEWWDESEESLEEEPRKVLAPEPEEIWVAEMLCGLKMKLKRRRVSLVLPEHHEAFNRLLEDPVIKRFLAWDKDLRVSDKYLLAMVIAYFSRAGFPSWQYQRIHFFLALYLANDMEEDDEDSKQNIFHFLYRKNRSRIPLLRKRWFQLGHSMNPRARKNRSRIPLLRKRRFQLYRSTNPRARKNRSRIPLLRKHRFQLYRSMNSRARKNRSQIVLFQKRRFHFFCSMSCRAWVSPEELEEIQAYDPEHWVWARDRAHLS.

Residues 1 to 89 (MDRTETRFRK…EEPEKELAPE (89 aa)) form a disordered region. The segment covering 16-39 (GKITTSRQPHPQNEQSPQRSTSGY) has biased composition (polar residues). The segment covering 76-89 (DESEEEPEKELAPE) has biased composition (acidic residues).

Belongs to the Speedy/Ringo family.

This is Speedy protein E6 (SPDYE6) from Homo sapiens (Human).